A 255-amino-acid polypeptide reads, in one-letter code: Imidazole glycerol phosphate synthase subunit HisF (255 aa).

Active-site residues include Asp11 and Asp130.

Belongs to the HisA/HisF family. As to quaternary structure, heterodimer of HisH and HisF.

It is found in the cytoplasm. It catalyses the reaction 5-[(5-phospho-1-deoxy-D-ribulos-1-ylimino)methylamino]-1-(5-phospho-beta-D-ribosyl)imidazole-4-carboxamide + L-glutamine = D-erythro-1-(imidazol-4-yl)glycerol 3-phosphate + 5-amino-1-(5-phospho-beta-D-ribosyl)imidazole-4-carboxamide + L-glutamate + H(+). The protein operates within amino-acid biosynthesis; L-histidine biosynthesis; L-histidine from 5-phospho-alpha-D-ribose 1-diphosphate: step 5/9. IGPS catalyzes the conversion of PRFAR and glutamine to IGP, AICAR and glutamate. The HisF subunit catalyzes the cyclization activity that produces IGP and AICAR from PRFAR using the ammonia provided by the HisH subunit. This is Imidazole glycerol phosphate synthase subunit HisF from Rhodopseudomonas palustris (strain BisB5).